Reading from the N-terminus, the 430-residue chain is L-lysine N6-monooxygenase MbtG (430 aa).

The first 21 residues, methionine 1–alanine 21, serve as a signal peptide directing secretion.

The protein belongs to the lysine N(6)-hydroxylase/L-ornithine N(5)-oxygenase family. Requires FAD as cofactor.

The catalysed reaction is L-lysine + NADPH + O2 = N(6)-hydroxy-L-lysine + NADP(+) + H2O. It functions in the pathway siderophore biosynthesis; mycobactin biosynthesis. Flavoprotein monooxygenase required for N-hydroxylation of the two acylated lysine residues during mycobactin assembly, thus producing the hydroxamate groups necessary for iron sequestration. Is also able, but less efficiently, to hydroxylate L-lysine (non acylated) in vitro. This Mycobacterium sp. (strain MCS) protein is L-lysine N6-monooxygenase MbtG (mbtG).